The sequence spans 161 residues: pEARLI1-like lipid transfer protein 1 (161 aa).

The N-terminal stretch at 1-25 (MASKNSASLALFFALNILFFTLTVA) is a signal peptide. Residues 32 to 39 (PSPKPKPV) form an A-1 repeat. The segment at 32 to 76 (PSPKPKPVPSPKPKPVQCPPPPRPSVPSPNPRPVTPPRTPGSSGN) is disordered. Over residues 33–70 (SPKPKPVPSPKPKPVQCPPPPRPSVPSPNPRPVTPPRT) the composition is skewed to pro residues. The 2 X 8 AA tandem repeats A of P-S-P-K-P-K-P-V stretch occupies residues 34–49 (PKPKPVPSPKPKPVQC). The stretch at 40–47 (PSPKPKPV) is one A-2 repeat.

Belongs to the plant LTP family. PEARLI1 subfamily. Self-interacts and binds to DIR1. Interacts with PDLP1.

The protein localises to the secreted. It localises to the cell wall. Its subcellular location is the endoplasmic reticulum. The protein resides in the cell junction. It is found in the plasmodesma. The protein localises to the plastid. It localises to the chloroplast. Functionally, probable lipid transfer protein (LTP). Seems to control the flowering process and lignin synthesis. Together with DIR1, required for glycerol-3-phosphate- (G3P) and azelaic acid- (AA) induced systemic acquired resistance (SAR). Component of plant systemic immunity involved in priming defenses in a AA-dependent manner, by modulating production and/or translocation of a mobile signal(s) during SAR. Confers resistance to Botrytis cinerea and Pseudomonas syringae pv. tomato DC3000 and PmaDG3. May be involved in induced systemic resistance (ISR) mediated by non-pathogenic bacteria (e.g. P. fluorescens GM30). Prevents electrolyte leakage during freezing damage. The sequence is that of pEARLI1-like lipid transfer protein 1 (AZI1) from Arabidopsis thaliana (Mouse-ear cress).